Reading from the N-terminus, the 79-residue chain is Small ribosomal subunit protein bS18 (79 aa).

This sequence belongs to the bacterial ribosomal protein bS18 family. In terms of assembly, part of the 30S ribosomal subunit. Forms a tight heterodimer with protein bS6.

Functionally, binds as a heterodimer with protein bS6 to the central domain of the 16S rRNA, where it helps stabilize the platform of the 30S subunit. In Streptococcus agalactiae serotype Ia (strain ATCC 27591 / A909 / CDC SS700), this protein is Small ribosomal subunit protein bS18.